Consider the following 294-residue polypeptide: 4-hydroxy-tetrahydrodipicolinate synthase (294 aa).

Thr45 contributes to the pyruvate binding site. Catalysis depends on Tyr133, which acts as the Proton donor/acceptor. Lys161 functions as the Schiff-base intermediate with substrate in the catalytic mechanism. Ile203 contacts pyruvate.

Belongs to the DapA family. Homotetramer; dimer of dimers.

It is found in the cytoplasm. It catalyses the reaction L-aspartate 4-semialdehyde + pyruvate = (2S,4S)-4-hydroxy-2,3,4,5-tetrahydrodipicolinate + H2O + H(+). It functions in the pathway amino-acid biosynthesis; L-lysine biosynthesis via DAP pathway; (S)-tetrahydrodipicolinate from L-aspartate: step 3/4. Catalyzes the condensation of (S)-aspartate-beta-semialdehyde [(S)-ASA] and pyruvate to 4-hydroxy-tetrahydrodipicolinate (HTPA). This chain is 4-hydroxy-tetrahydrodipicolinate synthase, found in Shewanella sp. (strain W3-18-1).